The chain runs to 494 residues: Glutamyl-tRNA(Gln) amidotransferase subunit A (494 aa).

Residues Lys-78 and Ser-158 each act as charge relay system in the active site. The active-site Acyl-ester intermediate is the Ser-182.

This sequence belongs to the amidase family. GatA subfamily. Heterotrimer of A, B and C subunits.

It catalyses the reaction L-glutamyl-tRNA(Gln) + L-glutamine + ATP + H2O = L-glutaminyl-tRNA(Gln) + L-glutamate + ADP + phosphate + H(+). Functionally, allows the formation of correctly charged Gln-tRNA(Gln) through the transamidation of misacylated Glu-tRNA(Gln) in organisms which lack glutaminyl-tRNA synthetase. The reaction takes place in the presence of glutamine and ATP through an activated gamma-phospho-Glu-tRNA(Gln). The polypeptide is Glutamyl-tRNA(Gln) amidotransferase subunit A (Jannaschia sp. (strain CCS1)).